Reading from the N-terminus, the 778-residue chain is Centromere/kinetochore protein zw10 homolog (778 aa).

The stretch at 47 to 99 (FDRLENLEDIAEMSTRNLSNLIDQTAKDSPEMLAEIKSQAQSCENLVEFLQSM) forms a coiled coil.

This sequence belongs to the ZW10 family. In terms of assembly, component of the RZZ complex composed of rod-1, czw-1 and zwl-1.

Its subcellular location is the chromosome. The protein localises to the centromere. The protein resides in the kinetochore. It localises to the cytoplasm. It is found in the cytoskeleton. Its subcellular location is the spindle. Functionally, essential component of the mitotic checkpoint, which prevents cells from prematurely exiting mitosis. Required for the assembly of the dynein-dynactin and mdf-1-mdf-2 complexes onto kinetochores. Its function related to the spindle assembly machinery and kinetochore-microtubule attachments likely depends on its association in the mitotic RZZ complex. The RZZ complex recruits the spindly-like protein spdl-1 to kinetochores. To prevent irregular chromosome segregation, the complex also inhibits the attachment of the kinetochore-associated NDC80 complex to microtubules. The recruitment of spdl-1 to kinetochores relieves this inhibition. Required for embryonic development. The sequence is that of Centromere/kinetochore protein zw10 homolog from Caenorhabditis elegans.